Here is a 143-residue protein sequence, read N- to C-terminus: Transcriptional regulator MraZ (143 aa).

SpoVT-AbrB domains are found at residues 5–47 (EYEH…PMPV) and 76–119 (ASDL…SAER).

Belongs to the MraZ family. As to quaternary structure, forms oligomers.

It is found in the cytoplasm. The protein localises to the nucleoid. In Herpetosiphon aurantiacus (strain ATCC 23779 / DSM 785 / 114-95), this protein is Transcriptional regulator MraZ.